The primary structure comprises 311 residues: Mycothiol acetyltransferase (311 aa).

Position 35 (Glu-35) interacts with 1D-myo-inositol 2-(L-cysteinylamino)-2-deoxy-alpha-D-glucopyranoside. Residue 79-81 participates in acetyl-CoA binding; sequence LVV. Residues 155 to 311 form the N-acetyltransferase domain; that stretch reads VRTYVGTVDD…TAYALARIDD (157 aa). Residues Glu-180, Lys-225, and Glu-235 each contribute to the 1D-myo-inositol 2-(L-cysteinylamino)-2-deoxy-alpha-D-glucopyranoside site. Acetyl-CoA-binding positions include 239 to 241 and 246 to 252; these read LGV and QGRGLGQ. Residue Tyr-278 participates in 1D-myo-inositol 2-(L-cysteinylamino)-2-deoxy-alpha-D-glucopyranoside binding. Position 283 to 288 (283 to 288) interacts with acetyl-CoA; the sequence is NVAAAR.

This sequence belongs to the acetyltransferase family. MshD subfamily. In terms of assembly, monomer.

The enzyme catalyses 1D-myo-inositol 2-(L-cysteinylamino)-2-deoxy-alpha-D-glucopyranoside + acetyl-CoA = mycothiol + CoA + H(+). Catalyzes the transfer of acetyl from acetyl-CoA to desacetylmycothiol (Cys-GlcN-Ins) to form mycothiol. The sequence is that of Mycothiol acetyltransferase from Mycobacterium leprae (strain Br4923).